The primary structure comprises 84 residues: Small ribosomal subunit protein uS15 (84 aa).

This sequence belongs to the universal ribosomal protein uS15 family. Part of the 30S ribosomal subunit. Forms a bridge to the 50S subunit in the 70S ribosome, contacting the 23S rRNA.

One of the primary rRNA binding proteins, it binds directly to 16S rRNA where it helps nucleate assembly of the platform of the 30S subunit by binding and bridging several RNA helices of the 16S rRNA. Functionally, forms an intersubunit bridge (bridge B4) with the 23S rRNA of the 50S subunit in the ribosome. The polypeptide is Small ribosomal subunit protein uS15 (Thermosipho melanesiensis (strain DSM 12029 / CIP 104789 / BI429)).